A 414-amino-acid chain; its full sequence is tRNA N6-adenosine threonylcarbamoyltransferase, mitochondrial (414 aa).

The N-terminal 29 residues, 1–29 (MLMLRRTAGAIPKPPKSKVYGFLRRFSVH), are a transit peptide targeting the mitochondrion. Residues lysine 74 and lysine 140 each carry the N6-acetyllysine modification. A divalent metal cation is bound by residues histidine 147 and histidine 151. Substrate contacts are provided by residues 169–173 (LISGG) and aspartate 202. Lysine 203 carries the post-translational modification N6-acetyllysine. The substrate site is built by glycine 222 and glutamate 226. 2 positions are modified to N6-acetyllysine: lysine 230 and lysine 299. Substrate-binding positions include 329–330 (SN) and threonine 357. Residue aspartate 358 participates in a divalent metal cation binding.

The protein belongs to the KAE1 / TsaD family. In terms of assembly, monomer. The cofactor is a divalent metal cation.

It localises to the mitochondrion. It carries out the reaction L-threonylcarbamoyladenylate + adenosine(37) in tRNA = N(6)-L-threonylcarbamoyladenosine(37) in tRNA + AMP + H(+). Required for the formation of a threonylcarbamoyl group on adenosine at position 37 (t(6)A37) in mitochondrial tRNAs that read codons beginning with adenine. Probably involved in the transfer of the threonylcarbamoyl moiety of threonylcarbamoyl-AMP (TC-AMP) to the N6 group of A37. Involved in mitochondrial genome maintenance. The chain is tRNA N6-adenosine threonylcarbamoyltransferase, mitochondrial from Mus musculus (Mouse).